The primary structure comprises 167 residues: NADH-ubiquinone oxidoreductase chain 6 (167 aa).

A run of 5 helical transmembrane segments spans residues 1-21 (MKMM…VAFA), 27-47 (VYGG…VVSL), 50-70 (VFLG…VFGY), 88-108 (VALS…LMSG), and 143-163 (WALV…LEVV).

The protein belongs to the complex I subunit 6 family. Core subunit of respiratory chain NADH dehydrogenase (Complex I) which is composed of 45 different subunits.

Its subcellular location is the mitochondrion inner membrane. The catalysed reaction is a ubiquinone + NADH + 5 H(+)(in) = a ubiquinol + NAD(+) + 4 H(+)(out). In terms of biological role, core subunit of the mitochondrial membrane respiratory chain NADH dehydrogenase (Complex I) which catalyzes electron transfer from NADH through the respiratory chain, using ubiquinone as an electron acceptor. Essential for the catalytic activity and assembly of complex I. This chain is NADH-ubiquinone oxidoreductase chain 6 (MT-ND6), found in Osphranter robustus (Wallaroo).